Here is a 217-residue protein sequence, read N- to C-terminus: MDPVVLSYMDSLLRQSDVSLLDPPNWLNDHIIGFAFEYFASSQFHDCSDHVCFISPEVTQFIKCTSSPAEIAMFLEPLDLPHKRVVFLAINDNSNQAAGGTHWSLLVYLQDKNSFFHYDSHSRSNSIHAKQVAEKLKAFLGSKGDKLVFVEEKAPAQQNSYDCGMYVICNTEALCQNLFRRQPESPLQLLTPTYITKKRGEWKDLIARLAKKNRSSY.

Methionine 1 carries the N-acetylmethionine modification. Positions 11 to 174 are protease; the sequence is SLLRQSDVSL…MYVICNTEAL (164 aa). Residues histidine 102 and aspartate 119 contribute to the active site. Cysteine 163 functions as the Nucleophile in the catalytic mechanism.

This sequence belongs to the peptidase C48 family.

In terms of biological role, protease that catalyzes two essential functions in the NEDD8 pathway: processing of full-length NEDD8 to its mature form and deconjugation of NEDD8 from targeted proteins such as cullins or p53. In Rattus norvegicus (Rat), this protein is Sentrin-specific protease 8 (Senp8).